A 388-amino-acid chain; its full sequence is Chorismate synthase (388 aa).

The NADP(+) site is built by R39 and R45. Residues 130-132 (RSS), 251-252 (NA), G296, 311-315 (KPIPT), and R337 contribute to the FMN site.

Belongs to the chorismate synthase family. Homotetramer. The cofactor is FMNH2.

The enzyme catalyses 5-O-(1-carboxyvinyl)-3-phosphoshikimate = chorismate + phosphate. It participates in metabolic intermediate biosynthesis; chorismate biosynthesis; chorismate from D-erythrose 4-phosphate and phosphoenolpyruvate: step 7/7. Functionally, catalyzes the anti-1,4-elimination of the C-3 phosphate and the C-6 proR hydrogen from 5-enolpyruvylshikimate-3-phosphate (EPSP) to yield chorismate, which is the branch point compound that serves as the starting substrate for the three terminal pathways of aromatic amino acid biosynthesis. This reaction introduces a second double bond into the aromatic ring system. The protein is Chorismate synthase of Streptococcus pyogenes serotype M5 (strain Manfredo).